The following is a 275-amino-acid chain: MAAESAKQTPYVLVADEVEWARLDAMHNGIAKFLGNELTPVDLGQPKKILEIGAGSGAWAIQAAKLYPDADVLAIDMNPIPARPLPPNVRYQNINVLEPFPFEAASFDVIHIRLVLCHLPDGHSVLKRIIDLVAPGGWLLIDDIDWAEAFEGLDKAPGIKRGLTALVRSMEAEAGDPHYGKTLKPYLEASKELSEVHVREVELPVNPIPEDPALAGLSQMMRKALVGALGAAKQSSATVGLTKEVQEGFLSEMAREDMDWSYSCYLYFAAVKKSA.

This sequence belongs to the methyltransferase superfamily. LaeA methyltransferase family.

It functions in the pathway mycotoxin biosynthesis. Its function is as follows. Methyltransferase; part of the gene cluster that mediates the biosynthesis of strobilurin A, an antifungal polyketide that contains a key beta-methoxyacrylate toxophore that targets the complex III of the mitochondrial electron transport chain. Strobilurin biosynthesis begins with construction of benzoyl CoA by step-wise elimination of ammonia from phenylalanine by the phenylalanine ammonia-lyase str11, oxygenation by str8 and retro-Claisen reaction to form benzoic acid, which is activated to its CoA thiolester benzoyl CoA by the dedicated CoA ligase str10. Benzoyl CoA forms the starter unit for the highly reducing polyketide synthase stpks1 that produces the polyketide prestrobilutin A. The FAD-dependent oxygenase str9 then catalyzes the key oxidative rearrangement responsible for the creation of the beta-methoxyacrylate toxophore. Str9 performs epoxidation of the 2,3 olefin of prestrobilutin A, followed by Meinwald rearrangement to furnish the aldehyde intermediate. Rapid enolization of the aldehyde intermediate would give the beta-methoxyacrylate skeleton and methylations catalyzed by str2 and str3 complete the synthesis and lead to the production of strobilurin A. The short-chain dehydrogenase stl2 and the dehydrogenase str4 play a role in the shunt pathway leading to the production of bolineol. The cluster encodes no obvious halogenase gene that could be involved in production of strobilurin B, nor any obvious dimethylallyl-transferase that could be involved in the production of strobilurin G. It is possible that unknown proteins encoded in, or near, the cluster (such as str1 or stl1) may form new classes of halogenases or dimethylally-transferases, or that the responsible genes are located elsewhere on the genome. Similarly, proteins encoded by str5/str6 hydrolases appear to have no chemical role in the biosynthesis of strobilurin A. Finally, no obvious self-resistance gene is found within the cluster. The protein is Methyltransferase str2 of Strobilurus tenacellus.